A 207-amino-acid polypeptide reads, in one-letter code: Large ribosomal subunit protein uL4 (207 aa).

A disordered region spans residues 50–75 (KTKTVSEVSGTTKKPFKQKGTGNARQ).

It belongs to the universal ribosomal protein uL4 family. As to quaternary structure, part of the 50S ribosomal subunit.

In terms of biological role, one of the primary rRNA binding proteins, this protein initially binds near the 5'-end of the 23S rRNA. It is important during the early stages of 50S assembly. It makes multiple contacts with different domains of the 23S rRNA in the assembled 50S subunit and ribosome. Functionally, forms part of the polypeptide exit tunnel. This chain is Large ribosomal subunit protein uL4, found in Rickettsia akari (strain Hartford).